Here is a 457-residue protein sequence, read N- to C-terminus: Serine--tRNA ligase (457 aa).

252-254 provides a ligand contact to L-serine; sequence TAE. ATP-binding positions include 283–285 and Val-299; that span reads RKE. Glu-306 is an L-serine binding site. 370–373 serves as a coordination point for ATP; that stretch reads EMVS. Thr-406 serves as a coordination point for L-serine.

The protein belongs to the class-II aminoacyl-tRNA synthetase family. Type-1 seryl-tRNA synthetase subfamily. Homodimer. The tRNA molecule binds across the dimer.

The protein resides in the cytoplasm. It catalyses the reaction tRNA(Ser) + L-serine + ATP = L-seryl-tRNA(Ser) + AMP + diphosphate + H(+). It carries out the reaction tRNA(Sec) + L-serine + ATP = L-seryl-tRNA(Sec) + AMP + diphosphate + H(+). Its pathway is aminoacyl-tRNA biosynthesis; selenocysteinyl-tRNA(Sec) biosynthesis; L-seryl-tRNA(Sec) from L-serine and tRNA(Sec): step 1/1. Functionally, catalyzes the attachment of serine to tRNA(Ser). Is also able to aminoacylate tRNA(Sec) with serine, to form the misacylated tRNA L-seryl-tRNA(Sec), which will be further converted into selenocysteinyl-tRNA(Sec). This chain is Serine--tRNA ligase, found in Saccharolobus islandicus (strain Y.N.15.51 / Yellowstone #2) (Sulfolobus islandicus).